Here is a 349-residue protein sequence, read N- to C-terminus: Isopentenyl-diphosphate delta-isomerase (349 aa).

6-7 (RK) provides a ligand contact to substrate. FMN-binding positions include 62–64 (AMT), Ser93, and Asn122. Gln152 lines the substrate pocket. A Mg(2+)-binding site is contributed by Glu153. FMN contacts are provided by residues Lys184, Thr214, 258–259 (GG), and 280–281 (AG).

The protein belongs to the IPP isomerase type 2 family. Homooctamer. Dimer of tetramers. It depends on FMN as a cofactor. Requires NADPH as cofactor. Mg(2+) serves as cofactor.

It is found in the cytoplasm. The enzyme catalyses isopentenyl diphosphate = dimethylallyl diphosphate. Functionally, involved in the biosynthesis of isoprenoids. Catalyzes the 1,3-allylic rearrangement of the homoallylic substrate isopentenyl (IPP) to its allylic isomer, dimethylallyl diphosphate (DMAPP). The chain is Isopentenyl-diphosphate delta-isomerase from Bacillus cereus (strain B4264).